Here is a 192-residue protein sequence, read N- to C-terminus: UPF0149 protein VP2588 (192 aa).

It belongs to the UPF0149 family.

This chain is UPF0149 protein VP2588, found in Vibrio parahaemolyticus serotype O3:K6 (strain RIMD 2210633).